We begin with the raw amino-acid sequence, 174 residues long: NADH-ubiquinone oxidoreductase chain 6 (174 aa).

4 helical membrane passes run 25–45, 48–68, 82–102, and 143–163; these read SMGL…SIYV, FWFS…LFIY, FSLT…FFMI, and LITL…VKIT.

Belongs to the complex I subunit 6 family.

The protein localises to the mitochondrion membrane. The catalysed reaction is a ubiquinone + NADH + 5 H(+)(in) = a ubiquinol + NAD(+) + 4 H(+)(out). Its function is as follows. Core subunit of the mitochondrial membrane respiratory chain NADH dehydrogenase (Complex I) that is believed to belong to the minimal assembly required for catalysis. Complex I functions in the transfer of electrons from NADH to the respiratory chain. The immediate electron acceptor for the enzyme is believed to be ubiquinone. The protein is NADH-ubiquinone oxidoreductase chain 6 (ND6) of Anopheles albimanus (New world malaria mosquito).